We begin with the raw amino-acid sequence, 44 residues long: Photosystem I reaction center subunit IX (44 aa).

The chain crosses the membrane as a helical span at residues 7–27; it reads YLSVAPVLSTLWFASLAGLLI.

It belongs to the PsaJ family.

The protein resides in the plastid. Its subcellular location is the chloroplast thylakoid membrane. Its function is as follows. May help in the organization of the PsaE and PsaF subunits. In Barbarea verna (Land cress), this protein is Photosystem I reaction center subunit IX.